The following is a 682-amino-acid chain: Protein asunder (682 aa).

The stretch at 517-570 (NGARLKLSKAKDQYRLLYRELEQLIHLNATTVHHKNLLESLQSLRAAYGEAKSE) forms a coiled coil. The segment covering 571–583 (PNSSLLRSYTESP) has biased composition (polar residues). The disordered stretch occupies residues 571-612 (PNSSLLRSYTESPHSPERLEPIPSGGSSGSNSNSLLKASKRR). The Nuclear localization signal (NLS) signature appears at 606–612 (LKASKRR).

Belongs to the Integrator subunit 13 family. Belongs to the multiprotein complex Integrator, at least composed of IntS1, IntS2, IntS3, IntS4, omd/IntS5, IntS6, defl/IntS7, IntS8, IntS9, IntS10, IntS11, IntS12, asun/IntS13, IntS14 and IntS15. The core complex associates with protein phosphatase 2A subunits mts/PP2A and Pp2A-29B, to form the Integrator-PP2A (INTAC) complex. In terms of processing, phosphorylated.

Its subcellular location is the nucleus. The protein localises to the cytoplasm. It localises to the perinuclear region. In terms of biological role, component of the integrator complex, a multiprotein complex that terminates RNA polymerase II (Pol II) transcription in the promoter-proximal region of genes. The integrator complex provides a quality checkpoint during transcription elongation by driving premature transcription termination of transcripts that are unfavorably configured for transcriptional elongation: the complex terminates transcription by (1) catalyzing dephosphorylation of the C-terminal domain (CTD) of Pol II subunit Polr2A/Rbp1 and Spt5, and (2) degrading the exiting nascent RNA transcript via endonuclease activity. The integrator complex is also involved in the 3'-end processing of the U7 snRNA, and also the spliceosomal snRNAs U1, U2, U4 and U5. This Drosophila ananassae (Fruit fly) protein is Protein asunder (asun).